Reading from the N-terminus, the 254-residue chain is MARRRQLYEGKAKVLFEGPEPGTLVQYFKDDATAGNGAKSGIITGKGVLNNRISEYLMLKLHEINIPTHFIRRLNMREQLIREVEIIPLEVVVRNVAAGSLSKRLGIPEGTRLPRTIIEYYYKNDALGDPMVSEEHIAAFNWAAPQDMDDMNQLALRTNDFLMGMFTAVGITLVDFKLEFGRIWEGEEMRILLADEISPDNCRLWDSKTNEKMDKDRFRRDMGRVEEAYQEVAKRLGILPESGNGDLKGPEAVQ.

The protein belongs to the SAICAR synthetase family.

The catalysed reaction is 5-amino-1-(5-phospho-D-ribosyl)imidazole-4-carboxylate + L-aspartate + ATP = (2S)-2-[5-amino-1-(5-phospho-beta-D-ribosyl)imidazole-4-carboxamido]succinate + ADP + phosphate + 2 H(+). It functions in the pathway purine metabolism; IMP biosynthesis via de novo pathway; 5-amino-1-(5-phospho-D-ribosyl)imidazole-4-carboxamide from 5-amino-1-(5-phospho-D-ribosyl)imidazole-4-carboxylate: step 1/2. The chain is Phosphoribosylaminoimidazole-succinocarboxamide synthase from Gluconobacter oxydans (strain 621H) (Gluconobacter suboxydans).